We begin with the raw amino-acid sequence, 300 residues long: Small ribosomal subunit biogenesis GTPase RsgA (300 aa).

The 163-residue stretch at arginine 69–phenylalanine 231 folds into the CP-type G domain. GTP-binding positions include asparagine 119–aspartate 122 and glycine 172–threonine 180. The Zn(2+) site is built by cysteine 255, cysteine 260, histidine 262, and cysteine 268.

Belongs to the TRAFAC class YlqF/YawG GTPase family. RsgA subfamily. In terms of assembly, monomer. Associates with 30S ribosomal subunit, binds 16S rRNA. Zn(2+) is required as a cofactor.

It is found in the cytoplasm. One of several proteins that assist in the late maturation steps of the functional core of the 30S ribosomal subunit. Helps release RbfA from mature subunits. May play a role in the assembly of ribosomal proteins into the subunit. Circularly permuted GTPase that catalyzes slow GTP hydrolysis, GTPase activity is stimulated by the 30S ribosomal subunit. This chain is Small ribosomal subunit biogenesis GTPase RsgA, found in Bordetella bronchiseptica (strain ATCC BAA-588 / NCTC 13252 / RB50) (Alcaligenes bronchisepticus).